Reading from the N-terminus, the 252-residue chain is Imidazole glycerol phosphate synthase subunit HisF (252 aa).

Catalysis depends on residues aspartate 11 and aspartate 130.

It belongs to the HisA/HisF family. In terms of assembly, heterodimer of HisH and HisF.

Its subcellular location is the cytoplasm. It carries out the reaction 5-[(5-phospho-1-deoxy-D-ribulos-1-ylimino)methylamino]-1-(5-phospho-beta-D-ribosyl)imidazole-4-carboxamide + L-glutamine = D-erythro-1-(imidazol-4-yl)glycerol 3-phosphate + 5-amino-1-(5-phospho-beta-D-ribosyl)imidazole-4-carboxamide + L-glutamate + H(+). The protein operates within amino-acid biosynthesis; L-histidine biosynthesis; L-histidine from 5-phospho-alpha-D-ribose 1-diphosphate: step 5/9. Functionally, IGPS catalyzes the conversion of PRFAR and glutamine to IGP, AICAR and glutamate. The HisF subunit catalyzes the cyclization activity that produces IGP and AICAR from PRFAR using the ammonia provided by the HisH subunit. This Azoarcus sp. (strain BH72) protein is Imidazole glycerol phosphate synthase subunit HisF.